Consider the following 399-residue polypeptide: MAATAAAVVAEEDTELRYLLVQTLENSGVLNRIKAELRAAVFLALEEQEKVENKTPLVNESLKKFLNTKDGRLVASLVAEFLQFFNLDFTLAVFQPETSTFQGLEGRENLARDLGIIEAEGTVGGPLLLEVIRRCQQKEKALTSGEGALDLSDVHSPPKSPEGKTGAHTPPSKIPRYKGQGNKKTSGQQPGAKKASNDASHSDTSISSSEPKSRSGLHLLAHETKIGSLLSNNSLDVNAKAGPGPEEDDLEGDSFFDDPIPKPEAAYGWRSEPSKQAGSLASLSDAPPLKSGLSSLAGAPSLKESESKRGNTVLKDLKLVNDKIGSLGLGTGEEDDYVDDFNSTSHRSEKSELSIGEEIEEDLSVEMDDVNTSDKLDDLTQDLTVSQLSDVADYLEDVA.

Residues 70-102 form the LisH domain; that stretch reads DGRLVASLVAEFLQFFNLDFTLAVFQPETSTFQ. Phosphothreonine is present on threonine 143. Residues 143–311 are disordered; it reads TSGEGALDLS…LKESESKRGN (169 aa). Serine 152, serine 156, serine 160, and serine 202 each carry phosphoserine. The span at 197 to 209 shows a compositional bias: low complexity; sequence NDASHSDTSISSS. Residues 245–256 show a composition bias toward acidic residues; that stretch reads PEEDDLEGDSFF. Low complexity predominate over residues 286 to 302; sequence APPLKSGLSSLAGAPSL. Phosphoserine is present on residues serine 301 and serine 326. Residues 328 to 357 form a disordered region; the sequence is GLGTGEEDDYVDDFNSTSHRSEKSELSIGE. Position 337 is a phosphotyrosine (tyrosine 337).

Belongs to the CEP43 family. In terms of assembly, homodimer. Part of a ternary complex that contains CEP350, CEP43 and MAPRE1. Interacts directly with CEP350 and MAPRE1. Interacts with CEP19. Interacts (via N-terminus) with CEP350 (via C-terminus).

The protein localises to the cytoplasm. It is found in the cytoskeleton. It localises to the microtubule organizing center. The protein resides in the centrosome. Its subcellular location is the centriole. The protein localises to the cilium basal body. Its function is as follows. Required for anchoring microtubules to the centrosomes. Required for ciliation. This is Centrosomal protein 43 (CEP43) from Bos taurus (Bovine).